The following is a 322-amino-acid chain: MFEIHPVKKVSVVIPVYNEQESLPELIRRTTKACESLGKEYEILLIDDGSSDNSAHMLVDASQAEGSHIVSILLNRNYGQHSAIMAGFSHVTGDLIITLDADLQNPPEEIPRLVAKADEGYDVVGTVRQNRQDSWFRKTASKMINRLIQRTTGKAMGDYGCMLRAYRRHIVDAMLHCHERSTFIPILANIFARRAIEIPVHHAEREFGESKYSFMRLINLMYDLVTCLTTTPLRMLSLLGSIIAIGGFSIAVLLVILRLTFGPQWAAEGVFMLFAVLFTFIGAQFIGMGLLGEYIGRIYTDVRARPRYFVQQVIRPSSKENE.

Over 1–235 the chain is Cytoplasmic; sequence MFEIHPVKKV…TCLTTTPLRM (235 aa). A helical transmembrane segment spans residues 236–256; that stretch reads LSLLGSIIAIGGFSIAVLLVI. At 257 to 269 the chain is on the periplasmic side; that stretch reads LRLTFGPQWAAEG. The helical transmembrane segment at 270–290 threads the bilayer; the sequence is VFMLFAVLFTFIGAQFIGMGL. Residues 291–322 are Cytoplasmic-facing; the sequence is LGEYIGRIYTDVRARPRYFVQQVIRPSSKENE.

The protein belongs to the glycosyltransferase 2 family.

Its subcellular location is the cell inner membrane. The enzyme catalyses UDP-4-deoxy-4-formamido-beta-L-arabinose + di-trans,octa-cis-undecaprenyl phosphate = 4-deoxy-4-formamido-alpha-L-arabinopyranosyl di-trans,octa-cis-undecaprenyl phosphate + UDP. It participates in glycolipid biosynthesis; 4-amino-4-deoxy-alpha-L-arabinose undecaprenyl phosphate biosynthesis; 4-amino-4-deoxy-alpha-L-arabinose undecaprenyl phosphate from UDP-4-deoxy-4-formamido-beta-L-arabinose and undecaprenyl phosphate: step 1/2. It functions in the pathway bacterial outer membrane biogenesis; lipopolysaccharide biosynthesis. In terms of biological role, catalyzes the transfer of 4-deoxy-4-formamido-L-arabinose from UDP to undecaprenyl phosphate. The modified arabinose is attached to lipid A and is required for resistance to polymyxin and cationic antimicrobial peptides. This Escherichia coli O7:K1 (strain IAI39 / ExPEC) protein is Undecaprenyl-phosphate 4-deoxy-4-formamido-L-arabinose transferase.